The following is a 105-amino-acid chain: Large ribosomal subunit protein uL24 (105 aa).

Belongs to the universal ribosomal protein uL24 family. In terms of assembly, part of the 50S ribosomal subunit.

In terms of biological role, one of two assembly initiator proteins, it binds directly to the 5'-end of the 23S rRNA, where it nucleates assembly of the 50S subunit. Its function is as follows. One of the proteins that surrounds the polypeptide exit tunnel on the outside of the subunit. This Mycobacterium leprae (strain Br4923) protein is Large ribosomal subunit protein uL24.